Reading from the N-terminus, the 138-residue chain is UPF0355 protein SSP2326 (138 aa).

The segment at 115-138 (NVAFETNQTKSNSHYSEETNGPKS) is disordered. The span at 118-138 (FETNQTKSNSHYSEETNGPKS) shows a compositional bias: polar residues.

Belongs to the UPF0355 family.

The polypeptide is UPF0355 protein SSP2326 (Staphylococcus saprophyticus subsp. saprophyticus (strain ATCC 15305 / DSM 20229 / NCIMB 8711 / NCTC 7292 / S-41)).